A 558-amino-acid polypeptide reads, in one-letter code: T-complex protein 1 subunit gamma (558 aa).

Cysteine 381 and cysteine 387 form a disulfide bridge.

This sequence belongs to the TCP-1 chaperonin family. Heterooligomeric complex of about 850 to 900 kDa that forms two stacked rings, 12 to 16 nm in diameter.

Its subcellular location is the cytoplasm. Its function is as follows. Molecular chaperone; assists the folding of proteins upon ATP hydrolysis. Known to play a role, in vitro, in the folding of actin and tubulin. The polypeptide is T-complex protein 1 subunit gamma (Thalassiosira weissflogii (Marine diatom)).